The primary structure comprises 88 residues: Small ribosomal subunit protein bS20 (88 aa).

The segment at 1 to 21 (MANTTSAKKATRKIARRTAVN) is disordered.

The protein belongs to the bacterial ribosomal protein bS20 family.

Binds directly to 16S ribosomal RNA. The protein is Small ribosomal subunit protein bS20 of Sinorhizobium fredii (strain NBRC 101917 / NGR234).